The following is a 261-amino-acid chain: Acyl-[acyl-carrier-protein]--UDP-N-acetylglucosamine O-acyltransferase (261 aa).

Belongs to the transferase hexapeptide repeat family. LpxA subfamily. As to quaternary structure, homotrimer.

It localises to the cytoplasm. It catalyses the reaction a (3R)-hydroxyacyl-[ACP] + UDP-N-acetyl-alpha-D-glucosamine = a UDP-3-O-[(3R)-3-hydroxyacyl]-N-acetyl-alpha-D-glucosamine + holo-[ACP]. It participates in glycolipid biosynthesis; lipid IV(A) biosynthesis; lipid IV(A) from (3R)-3-hydroxytetradecanoyl-[acyl-carrier-protein] and UDP-N-acetyl-alpha-D-glucosamine: step 1/6. Its function is as follows. Involved in the biosynthesis of lipid A, a phosphorylated glycolipid that anchors the lipopolysaccharide to the outer membrane of the cell. The polypeptide is Acyl-[acyl-carrier-protein]--UDP-N-acetylglucosamine O-acyltransferase (Trichlorobacter lovleyi (strain ATCC BAA-1151 / DSM 17278 / SZ) (Geobacter lovleyi)).